The following is a 664-amino-acid chain: MMTEKSNGVKSSPANNHNHHPPPSIKANGKDDHRAGSRPQSVAADDDTSSELQRLAEMDTPRRGRGGFRRIVRLVGIIRDWANKNFREEEPRPDSFLERFRGPELQTVTTHQGDGKGDKDGEGKGTKKKFELFVLDPAGDWYYRWLFVIAMPVLYNWCLLVARACFSDLQRNYFVVWLVLDYFSDTVYIADLIIRLRTGFLEQGLLVKDPKKLRDNYIHTLQFKLDVASIIPTDLIYFAVGIHSPEVRFNRLLHFARMFEFFDRTETRTSYPNIFRISNLVLYILVIIHWNACIYYAISKSIGFGVDTWVYPNITDPEYGYLAREYIYCLYWSTLTLTTIGETPPPVKDEEYLFVIFDFLIGVLIFATIVGNVGSMISNMNATRAEFQAKIDAVKHYMQFRKVSKDMEAKVIKWFDYLWTNKKTVDEREVLKNLPAKLRAEIAINVHLSTLKKVRIFQDCEAGLLVELVLKLRPQVFSPGDYICRKGDIGKEMYIIKEGKLAVVADDGVTQYALLSAGSCFGEISILNIKGSKMGNRRTANIRSLGYSDLFCLSKDDLMEAVTEYPDAKKVLEERGREILMKEGLLDENEVAASMEVDVQEKLEQLETNMETLYTRFARLLAEYTGAQQKLKQRITVLETKMKQNHEDDYLSDGINTPEPAVAE.

The segment covering 1–10 has biased composition (polar residues); it reads MMTEKSNGVK. Residues 1–61 form a disordered region; it reads MMTEKSNGVK…LQRLAEMDTP (61 aa). Over 1-146 the chain is Cytoplasmic; sequence MMTEKSNGVK…PAGDWYYRWL (146 aa). Residues 147–168 form a helical membrane-spanning segment; it reads FVIAMPVLYNWCLLVARACFSD. At 169 to 178 the chain is on the extracellular side; it reads LQRNYFVVWL. A helical transmembrane segment spans residues 179–199; the sequence is VLDYFSDTVYIADLIIRLRTG. Over 200 to 224 the chain is Cytoplasmic; the sequence is FLEQGLLVKDPKKLRDNYIHTLQFK. The chain crosses the membrane as a helical span at residues 225 to 243; that stretch reads LDVASIIPTDLIYFAVGIH. Topologically, residues 244–248 are extracellular; the sequence is SPEVR. The helical transmembrane segment at 249–267 threads the bilayer; that stretch reads FNRLLHFARMFEFFDRTET. The Cytoplasmic portion of the chain corresponds to 268-274; sequence RTSYPNI. The tract at residues 272–380 is ion conduction pathway; the sequence is PNIFRISNLV…GNVGSMISNM (109 aa). A helical membrane pass occupies residues 275–298; the sequence is FRISNLVLYILVIIHWNACIYYAI. Residues 299–321 are Extracellular-facing; the sequence is SKSIGFGVDTWVYPNITDPEYGY. A run of 2 helical transmembrane segments spans residues 322–356 and 357–381; these read LARE…LFVI and FDFL…SNMN. The segment at 339–342 is selectivity filter; that stretch reads TIGE. Positions 382 to 458 are C-linker; that stretch reads ATRAEFQAKI…STLKKVRIFQ (77 aa). Residues 382-664 are Cytoplasmic-facing; that stretch reads ATRAEFQAKI…INTPEPAVAE (283 aa). Positions 462–582 are cyclic nucleotide-binding domain; sequence AGLLVELVLK…EERGREILMK (121 aa). 3',5'-cyclic GMP contacts are provided by glycine 522, serine 525, arginine 538, and threonine 539. 3',5'-cyclic AMP-binding residues include arginine 538 and threonine 539. Residues 599 to 653 adopt a coiled-coil conformation; it reads VQEKLEQLETNMETLYTRFARLLAEYTGAQQKLKQRITVLETKMKQNHEDDYLSD.

The protein belongs to the cyclic nucleotide-gated cation channel (TC 1.A.1.5) family. CNGA2 subfamily. As to quaternary structure, the olfactory cyclic nucleotide-gated channel is an heterotetramer composed of CNGA2, CNGA4 and CNGB1b subunits with 2:1:1 stoichiometry.

The protein resides in the cell projection. Its subcellular location is the cilium membrane. It carries out the reaction Ca(2+)(in) = Ca(2+)(out). It catalyses the reaction Na(+)(in) = Na(+)(out). The enzyme catalyses K(+)(in) = K(+)(out). The catalysed reaction is NH4(+)(in) = NH4(+)(out). It carries out the reaction Rb(+)(in) = Rb(+)(out). It catalyses the reaction Li(+)(in) = Li(+)(out). The enzyme catalyses Cs(+)(in) = Cs(+)(out). In terms of biological role, pore-forming subunit of the olfactory cyclic nucleotide-gated channel. Operates in the cilia of olfactory sensory neurons where chemical stimulation of the odorant is converted to an electrical signal. Mediates odorant-induced cAMP-dependent Ca(2+) influx triggering neuron depolarization. The rise of intracellular Ca(2+) levels potentiates the olfactory response by activating Ca(2+)-dependent Cl(-) channels, but it also serves as a negative feedback signal to desensitize the channel for rapid adaptation to odorants. Conducts cAMP- and cGMP-gated ion currents, with permeability for monovalent and divalent cations. The polypeptide is Cyclic nucleotide-gated channel alpha-2 (Mus musculus (Mouse)).